Consider the following 226-residue polypeptide: Triosephosphate isomerase (226 aa).

10-12 (NFK) serves as a coordination point for substrate. The active-site Electrophile is the histidine 96. Residue glutamate 144 is the Proton acceptor of the active site. Substrate-binding positions include isoleucine 149, glycine 184, and 205–206 (AS).

The protein belongs to the triosephosphate isomerase family. In terms of assembly, homotetramer; dimer of dimers.

The protein localises to the cytoplasm. The enzyme catalyses D-glyceraldehyde 3-phosphate = dihydroxyacetone phosphate. Its pathway is carbohydrate biosynthesis; gluconeogenesis. It participates in carbohydrate degradation; glycolysis; D-glyceraldehyde 3-phosphate from glycerone phosphate: step 1/1. Involved in the gluconeogenesis. Catalyzes stereospecifically the conversion of dihydroxyacetone phosphate (DHAP) to D-glyceraldehyde-3-phosphate (G3P). In Methanopyrus kandleri (strain AV19 / DSM 6324 / JCM 9639 / NBRC 100938), this protein is Triosephosphate isomerase.